The primary structure comprises 682 residues: MTTQPRKILVTCALPYANGAIHLGHMLEHIQADIWVRFQRMRGNKIHFVCADDAHGTPIMLNADKLGITPEELIAKAKADHIRDFAGFNISFDNYHSTHSEENKQLTAEIYNKLKANGFIKSKVISQLFDPEKNMFLPDRFVKGTCPKCKAEDQYGDNCEVCASTYSPMDLINPRSAVSGTTPIVKESEHFFFDLPAFEGMLKEWTRSGSLQSEIANKMQEWFESGLQQWDISRDAPYFGFEIPGAKDKFFYVWLDAPIGYMASFKNLCNREGIDFNEFWAEGSDAELYHFIGKDIVYFHSLFWPAMLEGSGYRKPTNVFAHGYVTVDGAKMSKSRGTFIQASTYLNHIDPECLRYYYAAKLNDRIEDLDFNLDDFVQRVNTDIVNKLVNLASRNAGFIAKRFESKLADKLEDESLFAEFTAQAEQIAAYYESREYNKAIREIMALTDKANKYIDEKAPWVIAKEEGKEAELQAVCSMGIELFRVLMSYLKPVLPKLAERAEAFLQAELRWDNIHQPLLGHTLAPFKALFSRLEKKQIDAVVEETKALFAAANKAAEKTEAKPTALSAVEPIAETITIDDFAKLDMRVAKVLKCEAVPESNKLLRFELDLGDHTRQVFSGIKAAYNKPEELEGRFVIMVANLAPRKMKFGVSEGMILSAGTGGSDLFLLSADNGVTAGMQVK.

The short motif at proline 15–histidine 25 is the 'HIGH' region element. 4 residues coordinate Zn(2+): cysteine 146, cysteine 149, cysteine 159, and cysteine 162. The 'KMSKS' region signature appears at lysine 331–serine 335. Lysine 334 is a binding site for ATP. One can recognise a tRNA-binding domain in the interval aspartate 580 to lysine 682.

It belongs to the class-I aminoacyl-tRNA synthetase family. MetG type 1 subfamily. As to quaternary structure, homodimer. The cofactor is Zn(2+).

It is found in the cytoplasm. The enzyme catalyses tRNA(Met) + L-methionine + ATP = L-methionyl-tRNA(Met) + AMP + diphosphate. Is required not only for elongation of protein synthesis but also for the initiation of all mRNA translation through initiator tRNA(fMet) aminoacylation. This is Methionine--tRNA ligase from Haemophilus influenzae (strain PittGG).